The chain runs to 171 residues: Ribosome-binding factor A (171 aa).

Over residues 120–132 (AALAAAAQPAGDP) the composition is skewed to low complexity. The tract at residues 120–171 (AALAAAAQPAGDPDPYKKPVDHTDDWDEDDEDDRDGDDAVDALDAAADVPRL) is disordered. Positions 133–142 (DPYKKPVDHT) are enriched in basic and acidic residues. Residues 143–160 (DDWDEDDEDDRDGDDAVD) are compositionally biased toward acidic residues. Low complexity predominate over residues 161-171 (ALDAAADVPRL).

The protein belongs to the RbfA family. In terms of assembly, monomer. Binds 30S ribosomal subunits, but not 50S ribosomal subunits or 70S ribosomes.

The protein localises to the cytoplasm. In terms of biological role, one of several proteins that assist in the late maturation steps of the functional core of the 30S ribosomal subunit. Associates with free 30S ribosomal subunits (but not with 30S subunits that are part of 70S ribosomes or polysomes). Required for efficient processing of 16S rRNA. May interact with the 5'-terminal helix region of 16S rRNA. The chain is Ribosome-binding factor A from Kineococcus radiotolerans (strain ATCC BAA-149 / DSM 14245 / SRS30216).